Reading from the N-terminus, the 125-residue chain is Small ribosomal subunit protein uS13 (125 aa).

It belongs to the universal ribosomal protein uS13 family. Part of the 30S ribosomal subunit. Forms a loose heterodimer with protein S19. Forms two bridges to the 50S subunit in the 70S ribosome.

Its function is as follows. Located at the top of the head of the 30S subunit, it contacts several helices of the 16S rRNA. In the 70S ribosome it contacts the 23S rRNA (bridge B1a) and protein L5 of the 50S subunit (bridge B1b), connecting the 2 subunits; these bridges are implicated in subunit movement. Contacts the tRNAs in the A and P-sites. This Rickettsia rickettsii (strain Iowa) protein is Small ribosomal subunit protein uS13.